Reading from the N-terminus, the 883-residue chain is Pyruvate, phosphate dikinase 2 (883 aa).

The tract at residues 1–21 is disordered; sequence MAPAPCGRSSQRVFHFGKGKS. The Tele-phosphohistidine intermediate role is filled by H465. R571, R628, E757, G778, T779, N780, and D781 together coordinate substrate. E757 is a binding site for Mg(2+). D781 lines the Mg(2+) pocket. C843 functions as the Proton donor in the catalytic mechanism.

Belongs to the PEP-utilizing enzyme family. The cofactor is Mg(2+). In terms of tissue distribution, expressed in leaves, roots and stems.

It is found in the cytoplasm. The enzyme catalyses pyruvate + phosphate + ATP = phosphoenolpyruvate + AMP + diphosphate + H(+). Its function is as follows. Formation of phosphoenolpyruvate, which is the primary acceptor of CO(2) in C4 and some Crassulacean acid metabolism plants. The chain is Pyruvate, phosphate dikinase 2 from Zea mays (Maize).